The chain runs to 519 residues: Cyclic AMP-responsive element-binding protein 3-like protein 2 (519 aa).

The Cytoplasmic segment spans residues 1-374 (MEIMDSGEPF…SCRVTGTQTS (374 aa)). Disordered regions lie at residues 58 to 77 (GRGD…PVPP), 85 to 121 (YSLC…MEQE), and 193 to 261 (GLEC…SGPL). The span at 109–119 (ADSESDEWPME) shows a compositional bias: acidic residues. Low complexity-rich tracts occupy residues 205–217 (SSVG…SQSP) and 240–249 (PSSLSSSPLL). The 64-residue stretch at 291 to 354 (ALKKIRRKIK…KSLLQQLHSL (64 aa)) folds into the bZIP domain. The segment at 293–322 (KKIRRKIKNKISAQESRRKKKEYVDALEKK) is basic motif. Residues 333 to 354 (LRRKVENLECTNKSLLQQLHSL) form a leucine-zipper region. The helical; Signal-anchor for type II membrane protein transmembrane segment at 375 to 395 (TCLMVVVLCFSLFLGSFYPGL) threads the bilayer. Residues 396–519 (SPCSSITKAD…QLDRTVNETS (124 aa)) lie on the Lumenal side of the membrane. An S1P recognition motif is present at residues 423 to 426 (RSLL). 3 N-linked (GlcNAc...) asparagine glycosylation sites follow: Asn485, Asn503, and Asn516.

It belongs to the bZIP family. ATF subfamily. In terms of assembly, binds DNA as a dimer. Post-translationally, upon ER stress, translocated to the Golgi apparatus, where it is processed by regulated intramembrane proteolysis (RIP) to release the cytosol-facing N-terminal transcription factor domain. The cleavage is performed sequentially by site-1 and site-2 proteases (S1P/mbtps1 and S2P/mbtps2).

The protein localises to the endoplasmic reticulum membrane. Its subcellular location is the nucleus. Its function is as follows. Transcription factor involved in unfolded protein response (UPR). In the absence of endoplasmic reticulum (ER) stress, inserted into ER membranes, with N-terminal DNA-binding and transcription activation domains oriented toward the cytosolic face of the membrane. In response to ER stress, transported to the Golgi, where it is cleaved in a site-specific manner by resident proteases S1P/mbtps1 and S2P/mbtps2. The released N-terminal cytosolic domain is translocated to the nucleus to effect transcription of specific target genes. Plays a critical role in chondrogenesis. May protect neuroblastoma cells from ER stress-induced death. In vitro activates transcription of target genes via direct binding to the CRE site. The sequence is that of Cyclic AMP-responsive element-binding protein 3-like protein 2 (creb3l2) from Danio rerio (Zebrafish).